The following is a 268-amino-acid chain: Putative hydro-lyase ABSDF2257 (268 aa).

The protein belongs to the D-glutamate cyclase family.

The polypeptide is Putative hydro-lyase ABSDF2257 (Acinetobacter baumannii (strain SDF)).